The chain runs to 149 residues: Aspartate 1-decarboxylase (149 aa).

The active-site Schiff-base intermediate with substrate; via pyruvic acid is serine 25. Position 25 is a pyruvic acid (Ser) (serine 25). Residue threonine 57 participates in substrate binding. Tyrosine 58 functions as the Proton donor in the catalytic mechanism. Residue 73–75 (GAA) participates in substrate binding. Residues 119 to 149 (GDPAAALPGDPSSLRGDVLDPAGARGLGGGA) form a disordered region.

The protein belongs to the PanD family. In terms of assembly, heterooctamer of four alpha and four beta subunits. It depends on pyruvate as a cofactor. Is synthesized initially as an inactive proenzyme, which is activated by self-cleavage at a specific serine bond to produce a beta-subunit with a hydroxyl group at its C-terminus and an alpha-subunit with a pyruvoyl group at its N-terminus.

It is found in the cytoplasm. It carries out the reaction L-aspartate + H(+) = beta-alanine + CO2. Its pathway is cofactor biosynthesis; (R)-pantothenate biosynthesis; beta-alanine from L-aspartate: step 1/1. Its function is as follows. Catalyzes the pyruvoyl-dependent decarboxylation of aspartate to produce beta-alanine. This Parafrankia sp. (strain EAN1pec) protein is Aspartate 1-decarboxylase.